The chain runs to 94 residues: MFTINVEVRKDQGKGASRRLRIANKFPAIVYGGEEAPVSIELDHDSVKNMESKPEFYSEAVTLVIDGKETKVKVQAVQRHPFKPKLAHIDFRRV.

This sequence belongs to the bacterial ribosomal protein bL25 family. Part of the 50S ribosomal subunit; part of the 5S rRNA/L5/L18/L25 subcomplex. Contacts the 5S rRNA. Binds to the 5S rRNA independently of L5 and L18.

Functionally, this is one of the proteins that binds to the 5S RNA in the ribosome where it forms part of the central protuberance. This is Large ribosomal subunit protein bL25 from Serratia proteamaculans (strain 568).